We begin with the raw amino-acid sequence, 321 residues long: Epoxyqueuosine reductase (321 aa).

Asp-137 (proton donor) is an active-site residue. In terms of domain architecture, 4Fe-4S ferredoxin-type spans 179-211 (EPLNADPPARSLCGRCSACIDACPTHAIREPFV). [4Fe-4S] cluster-binding residues include Cys-191, Cys-194, Cys-197, Cys-201, Cys-217, Cys-245, Cys-248, and Cys-252.

The protein belongs to the QueG family. Monomer. The cofactor is cob(II)alamin. [4Fe-4S] cluster is required as a cofactor.

Its subcellular location is the cytoplasm. The enzyme catalyses epoxyqueuosine(34) in tRNA + AH2 = queuosine(34) in tRNA + A + H2O. It participates in tRNA modification; tRNA-queuosine biosynthesis. Catalyzes the conversion of epoxyqueuosine (oQ) to queuosine (Q), which is a hypermodified base found in the wobble positions of tRNA(Asp), tRNA(Asn), tRNA(His) and tRNA(Tyr). The polypeptide is Epoxyqueuosine reductase (Synechococcus sp. (strain CC9605)).